A 490-amino-acid chain; its full sequence is 4-hydroxybutyryl-CoA dehydratase/vinylacetyl-CoA-Delta-isomerase (490 aa).

Cys99 and Cys103 together coordinate [4Fe-4S] cluster. FAD contacts are provided by residues 149-156 (MTDPKGDR) and 188-190 (HQT). Residues His292 and Cys299 each coordinate [4Fe-4S] cluster. Residues His325 and 386–390 (DIAGG) contribute to the FAD site.

Homotetramer. It depends on FAD as a cofactor. [4Fe-4S] cluster is required as a cofactor.

The catalysed reaction is 4-hydroxybutanoyl-CoA = (2E)-butenoyl-CoA + H2O. The enzyme catalyses vinylacetyl-CoA = (2E)-butenoyl-CoA. In terms of biological role, catalyzes the reversible conversion of 4-hydroxybutyryl-CoA to crotonyl-CoA. The mechanism of the reaction seems to go through three steps: (1) the FAD-dependent oxidation of 4-hydroxybutyryl-CoA to 4-hydroxycrotonyl-CoA; (2) the hydroxyl group is substituted by a hydride derived from the now reduced FAD in an SN2' reaction leading to vinylacetyl-CoA; (3) isomerization to yield crotonyl-CoA. The polypeptide is 4-hydroxybutyryl-CoA dehydratase/vinylacetyl-CoA-Delta-isomerase (abfD) (Clostridium aminobutyricum).